Reading from the N-terminus, the 369-residue chain is Outer membrane porin F (369 aa).

An N-terminal signal peptide occupies residues 1 to 21; that stretch reads MKRNILAVVIPALLVAGTANA. The chain crosses the membrane as a beta stranded span at residues 22–27; sequence AEIFNK. Residue Asp28 is a topological domain, periplasmic. The chain crosses the membrane as a beta stranded span at residues 29-44; it reads GNKLDLYGKVDVRHQF. Topologically, residues 45–55 are extracellular; it reads ADKRSSEDGDD. The chain crosses the membrane as a beta stranded span at residues 56 to 68; it reads SYARIGIKGETQI. The Periplasmic segment spans residues 69 to 70; sequence SD. A beta stranded transmembrane segment spans residues 71 to 83; sequence QLTGFGRWEYNVK. The Extracellular portion of the chain corresponds to 84–97; the sequence is AKGTEAAVAESSTR. The beta stranded transmembrane segment at 98–106 threads the bilayer; sequence LAFAGLKFA. The Periplasmic segment spans residues 107-108; that stretch reads NY. Residues 109–115 traverse the membrane as a beta stranded segment; it reads GSLDYGR. The Extracellular segment spans residues 116–150; sequence NYGVNYDVNAWTDVLPIFGGDAMAQTDNFMTGRST. The beta stranded transmembrane segment at 151 to 157 threads the bilayer; sequence GLLTYRN. The Periplasmic segment spans residues 158–165; the sequence is TDFFGLVD. Residues 166–177 traverse the membrane as a beta stranded segment; sequence GLNFALQYQGQN. Residues 178–193 lie on the Extracellular side of the membrane; sequence SDRTKNKGRDTERSNG. The beta stranded transmembrane segment at 194–204 threads the bilayer; that stretch reads DGYGLSSTYDV. At 205 to 206 the chain is on the periplasmic side; the sequence is GY. A beta stranded membrane pass occupies residues 207-219; that stretch reads GITVGGSYANSAR. The Extracellular segment spans residues 220 to 234; it reads TADQKEKVSDAYGKR. A beta stranded transmembrane segment spans residues 235–246; it reads AEAWNIGAKYDA. Residue Asn247 is a topological domain, periplasmic. The chain crosses the membrane as a beta stranded span at residues 248–259; sequence NVYLAAMYGETR. Over 260–278 the chain is Extracellular; that stretch reads NMTRYTRTIADTDATLIAN. Residues 279–291 form a beta stranded membrane-spanning segment; sequence KTQNIELTAQYLF. At 292-294 the chain is on the periplasmic side; sequence SDL. The chain crosses the membrane as a beta stranded span at residues 295 to 308; that stretch reads GLKPSLAYVQSKGK. At 309 to 320 the chain is on the extracellular side; that stretch reads DLTEGKGFNGDL. Residues 321 to 332 form a beta stranded membrane-spanning segment; the sequence is VKYVSVGTYYYF. Residues 333–334 lie on the Periplasmic side of the membrane; the sequence is NK. The beta stranded transmembrane segment at 335-344 threads the bilayer; the sequence is NLSTYVDYKI. The Extracellular segment spans residues 345 to 359; sequence NLLKKDNELGVNARN. The chain crosses the membrane as a beta stranded span at residues 360–369; it reads VFGVGLTYQF.

The protein belongs to the Gram-negative porin family. Homotrimer.

It localises to the cell outer membrane. Forms pores that allow passive diffusion of small molecules across the outer membrane. The polypeptide is Outer membrane porin F (ompF) (Xenorhabdus nematophila (strain ATCC 19061 / DSM 3370 / CCUG 14189 / LMG 1036 / NCIMB 9965 / AN6)).